A 559-amino-acid chain; its full sequence is DnaJ homolog subfamily C member 11 (559 aa).

N-acetylalanine is present on A2. The region spanning 14 to 82 (DYYSLLNVRR…QTRAIYDIYG (69 aa)) is the J domain. S204 is subject to Phosphoserine. A coiled-coil region spans residues 415 to 457 (QKEKELEKQRENTASDILQKKQEAEAAVRLMQESVRRIIEAEE).

Belongs to the DNAJC11 family. In terms of assembly, associates with the mitochondrial contact site and cristae organizing system (MICOS) complex, composed of at least MICOS10/MIC10, CHCHD3/MIC19, CHCHD6/MIC25, APOOL/MIC27, IMMT/MIC60, APOO/MIC23/MIC26 and QIL1/MIC13. This complex was also known under the names MINOS or MitOS complex. The MICOS complex associates with mitochondrial outer membrane proteins SAMM50, MTX1 and MTX2 (together described as components of the mitochondrial outer membrane sorting assembly machinery (SAM) complex) and DNAJC11, mitochondrial inner membrane protein TMEM11 and with HSPA9. The MICOS and SAM complexes together with DNAJC11 are part of a large protein complex spanning both membranes termed the mitochondrial intermembrane space bridging (MIB) complex.

The protein localises to the mitochondrion. It is found in the mitochondrion outer membrane. In terms of biological role, required for mitochondrial inner membrane organization. Seems to function through its association with the MICOS complex and the mitochondrial outer membrane sorting assembly machinery (SAM) complex. The chain is DnaJ homolog subfamily C member 11 (Dnajc11) from Mus musculus (Mouse).